A 366-amino-acid chain; its full sequence is Chorismate synthase (366 aa).

Arg48 provides a ligand contact to NADP(+). Residues 125–127 (RSS), Gly285, 300–304 (KPTPS), and Arg327 each bind FMN.

The protein belongs to the chorismate synthase family. The cofactor is FMNH2.

It catalyses the reaction 5-O-(1-carboxyvinyl)-3-phosphoshikimate = chorismate + phosphate. It functions in the pathway metabolic intermediate biosynthesis; chorismate biosynthesis; chorismate from D-erythrose 4-phosphate and phosphoenolpyruvate: step 7/7. Its function is as follows. Catalyzes the anti-1,4-elimination of the C-3 phosphate and the C-6 proR hydrogen from 5-enolpyruvylshikimate-3-phosphate (EPSP) to yield chorismate, which is the branch point compound that serves as the starting substrate for the three terminal pathways of aromatic amino acid biosynthesis. This reaction introduces a second double bond into the aromatic ring system. The sequence is that of Chorismate synthase from Methanococcoides burtonii (strain DSM 6242 / NBRC 107633 / OCM 468 / ACE-M).